Consider the following 449-residue polypeptide: Sensor protein QseC (449 aa).

Residues 1–12 lie on the Cytoplasmic side of the membrane; it reads MKLTQRLSLRVR. Residues 13–33 form a helical membrane-spanning segment; that stretch reads LTLIFLILVSITWAISSFVAW. Residues 34-161 lie on the Periplasmic side of the membrane; that stretch reads RKTTDNVDEL…REDMALAIVA (128 aa). A helical membrane pass occupies residues 162-182; sequence AQLTPWLIALPFMLLILLLLL. The HAMP domain maps to 183–235; sequence HRELRPLKKLAQALRFRSPESETPLDAKGVPSEVRPLVEALNQLFSRIHSMMV. At 183-449 the chain is on the cytoplasmic side; the sequence is HRELRPLKKL…EGGFEAVVSW (267 aa). The 207-residue stretch at 243-449 folds into the Histidine kinase domain; it reads DAAHELRSPL…EGGFEAVVSW (207 aa). H246 bears the Phosphohistidine; by autocatalysis mark.

The protein localises to the cell inner membrane. The catalysed reaction is ATP + protein L-histidine = ADP + protein N-phospho-L-histidine.. Member of a two-component regulatory system QseB/QseC. Activates the flagella regulon by activating transcription of FlhDC. May activate QseB by phosphorylation. The polypeptide is Sensor protein QseC (qseC) (Salmonella typhimurium (strain LT2 / SGSC1412 / ATCC 700720)).